The primary structure comprises 388 residues: Formate-dependent phosphoribosylglycinamide formyltransferase (388 aa).

N(1)-(5-phospho-beta-D-ribosyl)glycinamide contacts are provided by residues 15–16 (EL) and E75. ATP contacts are provided by residues R107, K148, 153–158 (SSGKGQ), 188–191 (EEFL), and E196. The 191-residue stretch at 112–302 (DLASAELALL…EFELHLRAVL (191 aa)) folds into the ATP-grasp domain. Residues E261 and E273 each contribute to the Mg(2+) site. N(1)-(5-phospho-beta-D-ribosyl)glycinamide is bound by residues D280, K350, and 357–358 (RR).

This sequence belongs to the PurK/PurT family. As to quaternary structure, homodimer.

It catalyses the reaction N(1)-(5-phospho-beta-D-ribosyl)glycinamide + formate + ATP = N(2)-formyl-N(1)-(5-phospho-beta-D-ribosyl)glycinamide + ADP + phosphate + H(+). It participates in purine metabolism; IMP biosynthesis via de novo pathway; N(2)-formyl-N(1)-(5-phospho-D-ribosyl)glycinamide from N(1)-(5-phospho-D-ribosyl)glycinamide (formate route): step 1/1. Functionally, involved in the de novo purine biosynthesis. Catalyzes the transfer of formate to 5-phospho-ribosyl-glycinamide (GAR), producing 5-phospho-ribosyl-N-formylglycinamide (FGAR). Formate is provided by PurU via hydrolysis of 10-formyl-tetrahydrofolate. In Prochlorococcus marinus (strain MIT 9313), this protein is Formate-dependent phosphoribosylglycinamide formyltransferase.